Here is a 527-residue protein sequence, read N- to C-terminus: Probable bifunctional methylthioribulose-1-phosphate dehydratase/enolase-phosphatase E1 (527 aa).

Residues M1–D244 form a methylthioribulose-1-phosphate dehydratase region. A substrate-binding site is contributed by C116. H134 and H136 together coordinate Zn(2+). The Proton donor/acceptor; for methylthioribulose-1-phosphate dehydratase activity role is filled by E159. H209 provides a ligand contact to Zn(2+). The tract at residues I288–I527 is enolase-phosphatase E1. D291 and E293 together coordinate Mg(2+). Substrate is bound by residues S426–S427 and K460. D486 lines the Mg(2+) pocket.

It in the N-terminal section; belongs to the aldolase class II family. MtnB subfamily. The protein in the C-terminal section; belongs to the HAD-like hydrolase superfamily. MasA/MtnC family. Zn(2+) serves as cofactor. Requires Mg(2+) as cofactor.

The catalysed reaction is 5-(methylsulfanyl)-D-ribulose 1-phosphate = 5-methylsulfanyl-2,3-dioxopentyl phosphate + H2O. It catalyses the reaction 5-methylsulfanyl-2,3-dioxopentyl phosphate + H2O = 1,2-dihydroxy-5-(methylsulfanyl)pent-1-en-3-one + phosphate. Its pathway is amino-acid biosynthesis; L-methionine biosynthesis via salvage pathway; L-methionine from S-methyl-5-thio-alpha-D-ribose 1-phosphate: step 2/6. The protein operates within amino-acid biosynthesis; L-methionine biosynthesis via salvage pathway; L-methionine from S-methyl-5-thio-alpha-D-ribose 1-phosphate: step 3/6. It participates in amino-acid biosynthesis; L-methionine biosynthesis via salvage pathway; L-methionine from S-methyl-5-thio-alpha-D-ribose 1-phosphate: step 4/6. The polypeptide is Probable bifunctional methylthioribulose-1-phosphate dehydratase/enolase-phosphatase E1 (Ricinus communis (Castor bean)).